Here is a 195-residue protein sequence, read N- to C-terminus: 3-isopropylmalate dehydratase small subunit (195 aa).

Belongs to the LeuD family. LeuD type 1 subfamily. Heterodimer of LeuC and LeuD.

The enzyme catalyses (2R,3S)-3-isopropylmalate = (2S)-2-isopropylmalate. Its pathway is amino-acid biosynthesis; L-leucine biosynthesis; L-leucine from 3-methyl-2-oxobutanoate: step 2/4. Its function is as follows. Catalyzes the isomerization between 2-isopropylmalate and 3-isopropylmalate, via the formation of 2-isopropylmaleate. In Karelsulcia muelleri (strain GWSS) (Sulcia muelleri), this protein is 3-isopropylmalate dehydratase small subunit.